A 365-amino-acid chain; its full sequence is tRNA N6-adenosine threonylcarbamoyltransferase (365 aa).

2 residues coordinate Fe cation: His-119 and His-123. Residues 141–145, Asp-174, Gly-187, and Asn-288 each bind substrate; that span reads LVSGG. Asp-316 contributes to the Fe cation binding site.

Belongs to the KAE1 / TsaD family. Fe(2+) serves as cofactor.

The protein localises to the cytoplasm. The catalysed reaction is L-threonylcarbamoyladenylate + adenosine(37) in tRNA = N(6)-L-threonylcarbamoyladenosine(37) in tRNA + AMP + H(+). Its function is as follows. Required for the formation of a threonylcarbamoyl group on adenosine at position 37 (t(6)A37) in tRNAs that read codons beginning with adenine. Is involved in the transfer of the threonylcarbamoyl moiety of threonylcarbamoyl-AMP (TC-AMP) to the N6 group of A37, together with TsaE and TsaB. TsaD likely plays a direct catalytic role in this reaction. In Rhizobium etli (strain ATCC 51251 / DSM 11541 / JCM 21823 / NBRC 15573 / CFN 42), this protein is tRNA N6-adenosine threonylcarbamoyltransferase.